We begin with the raw amino-acid sequence, 465 residues long: Siroheme synthase (465 aa).

Residues 1-203 (MDFLPLFHSL…GRPAEAERLL (203 aa)) form a precorrin-2 dehydrogenase /sirohydrochlorin ferrochelatase region. NAD(+) is bound by residues 22 to 23 (EV) and 43 to 44 (PQ). Residue S128 is modified to Phosphoserine. Residues 217-465 (GEVYLVGAGP…AWFEGAREDA (249 aa)) are uroporphyrinogen-III C-methyltransferase. P226 is a binding site for S-adenosyl-L-methionine. D249 functions as the Proton acceptor in the catalytic mechanism. The Proton donor role is filled by K271. Residues 302–304 (GGD), I307, 332–333 (TA), M384, and G413 each bind S-adenosyl-L-methionine.

This sequence in the N-terminal section; belongs to the precorrin-2 dehydrogenase / sirohydrochlorin ferrochelatase family. It in the C-terminal section; belongs to the precorrin methyltransferase family.

It catalyses the reaction uroporphyrinogen III + 2 S-adenosyl-L-methionine = precorrin-2 + 2 S-adenosyl-L-homocysteine + H(+). The enzyme catalyses precorrin-2 + NAD(+) = sirohydrochlorin + NADH + 2 H(+). It carries out the reaction siroheme + 2 H(+) = sirohydrochlorin + Fe(2+). It participates in cofactor biosynthesis; adenosylcobalamin biosynthesis; precorrin-2 from uroporphyrinogen III: step 1/1. Its pathway is cofactor biosynthesis; adenosylcobalamin biosynthesis; sirohydrochlorin from precorrin-2: step 1/1. The protein operates within porphyrin-containing compound metabolism; siroheme biosynthesis; precorrin-2 from uroporphyrinogen III: step 1/1. It functions in the pathway porphyrin-containing compound metabolism; siroheme biosynthesis; siroheme from sirohydrochlorin: step 1/1. It participates in porphyrin-containing compound metabolism; siroheme biosynthesis; sirohydrochlorin from precorrin-2: step 1/1. Its function is as follows. Multifunctional enzyme that catalyzes the SAM-dependent methylations of uroporphyrinogen III at position C-2 and C-7 to form precorrin-2 via precorrin-1. Then it catalyzes the NAD-dependent ring dehydrogenation of precorrin-2 to yield sirohydrochlorin. Finally, it catalyzes the ferrochelation of sirohydrochlorin to yield siroheme. In Pseudomonas aeruginosa (strain LESB58), this protein is Siroheme synthase.